The following is a 281-amino-acid chain: 4-diphosphocytidyl-2-C-methyl-D-erythritol kinase (281 aa).

The active site involves lysine 15. Residue 98–108 coordinates ATP; it reads PTGAGLGGGSS. Aspartate 140 is a catalytic residue.

This sequence belongs to the GHMP kinase family. IspE subfamily.

The catalysed reaction is 4-CDP-2-C-methyl-D-erythritol + ATP = 4-CDP-2-C-methyl-D-erythritol 2-phosphate + ADP + H(+). It functions in the pathway isoprenoid biosynthesis; isopentenyl diphosphate biosynthesis via DXP pathway; isopentenyl diphosphate from 1-deoxy-D-xylulose 5-phosphate: step 3/6. Its function is as follows. Catalyzes the phosphorylation of the position 2 hydroxy group of 4-diphosphocytidyl-2C-methyl-D-erythritol. This is 4-diphosphocytidyl-2-C-methyl-D-erythritol kinase from Neisseria meningitidis serogroup C (strain 053442).